A 301-amino-acid chain; its full sequence is MYSPVESEQGFNFKPELPTSSAYYRLLKKLRRQVGHAIRDFKMIEDGDKVMVCVSGGKDSYTLLDILLQFKRIAPINFDIVAVNLDQKQPGFPEDVLPRYMEENNIPYYILEKDTYTITKRLTPEGKTYCAVCSRLRRGSLYGFAQEIGATKVALGHHRDDIIATFFLNLFHGGSLKAMPPKLLSSDKKNILIRPLAYVEEKDIIKYADLRKFPIIPCNLCGSQENLQRAMLNEMLREWDKQYPKRLHSIFGALQNVSPSQLADRDLFDFEILDSQRELDFKDPEEMKKRLDIVNLSFAAD.

Positions 55-60 (SGGKDS) match the PP-loop motif motif. Cys-130, Cys-133, and Cys-221 together coordinate [4Fe-4S] cluster.

It belongs to the TtcA family. As to quaternary structure, homodimer. The cofactor is Mg(2+). It depends on [4Fe-4S] cluster as a cofactor.

It localises to the cytoplasm. It carries out the reaction cytidine(32) in tRNA + S-sulfanyl-L-cysteinyl-[cysteine desulfurase] + AH2 + ATP = 2-thiocytidine(32) in tRNA + L-cysteinyl-[cysteine desulfurase] + A + AMP + diphosphate + H(+). The protein operates within tRNA modification. Catalyzes the ATP-dependent 2-thiolation of cytidine in position 32 of tRNA, to form 2-thiocytidine (s(2)C32). The sulfur atoms are provided by the cysteine/cysteine desulfurase (IscS) system. In Acinetobacter baylyi (strain ATCC 33305 / BD413 / ADP1), this protein is tRNA-cytidine(32) 2-sulfurtransferase.